The following is a 603-amino-acid chain: Proline--tRNA ligase (603 aa).

Belongs to the class-II aminoacyl-tRNA synthetase family. ProS type 1 subfamily. As to quaternary structure, homodimer.

It localises to the cytoplasm. The catalysed reaction is tRNA(Pro) + L-proline + ATP = L-prolyl-tRNA(Pro) + AMP + diphosphate. Functionally, catalyzes the attachment of proline to tRNA(Pro) in a two-step reaction: proline is first activated by ATP to form Pro-AMP and then transferred to the acceptor end of tRNA(Pro). As ProRS can inadvertently accommodate and process non-cognate amino acids such as alanine and cysteine, to avoid such errors it has two additional distinct editing activities against alanine. One activity is designated as 'pretransfer' editing and involves the tRNA(Pro)-independent hydrolysis of activated Ala-AMP. The other activity is designated 'posttransfer' editing and involves deacylation of mischarged Ala-tRNA(Pro). The misacylated Cys-tRNA(Pro) is not edited by ProRS. The protein is Proline--tRNA ligase of Prochlorococcus marinus (strain SARG / CCMP1375 / SS120).